Here is a 117-residue protein sequence, read N- to C-terminus: Large ribosomal subunit protein bL20 (117 aa).

This sequence belongs to the bacterial ribosomal protein bL20 family.

In terms of biological role, binds directly to 23S ribosomal RNA and is necessary for the in vitro assembly process of the 50S ribosomal subunit. It is not involved in the protein synthesizing functions of that subunit. This is Large ribosomal subunit protein bL20 from Trichlorobacter lovleyi (strain ATCC BAA-1151 / DSM 17278 / SZ) (Geobacter lovleyi).